Here is a 122-residue protein sequence, read N- to C-terminus: Large ribosomal subunit protein uL14 (122 aa).

This sequence belongs to the universal ribosomal protein uL14 family. Part of the 50S ribosomal subunit. Forms a cluster with proteins L3 and L19. In the 70S ribosome, L14 and L19 interact and together make contacts with the 16S rRNA in bridges B5 and B8.

Functionally, binds to 23S rRNA. Forms part of two intersubunit bridges in the 70S ribosome. This is Large ribosomal subunit protein uL14 from Rhodopseudomonas palustris (strain HaA2).